The sequence spans 288 residues: ATP synthase gamma chain (288 aa).

This sequence belongs to the ATPase gamma chain family. In terms of assembly, F-type ATPases have 2 components, CF(1) - the catalytic core - and CF(0) - the membrane proton channel. CF(1) has five subunits: alpha(3), beta(3), gamma(1), delta(1), epsilon(1). CF(0) has three main subunits: a, b and c.

The protein localises to the cell inner membrane. Produces ATP from ADP in the presence of a proton gradient across the membrane. The gamma chain is believed to be important in regulating ATPase activity and the flow of protons through the CF(0) complex. The protein is ATP synthase gamma chain of Rickettsia bellii (strain OSU 85-389).